A 105-amino-acid chain; its full sequence is DNA-directed RNA polymerase subunit omega (105 aa).

Belongs to the RNA polymerase subunit omega family. The RNAP catalytic core consists of 2 alpha, 1 beta, 1 beta' and 1 omega subunit. When a sigma factor is associated with the core the holoenzyme is formed, which can initiate transcription.

It carries out the reaction RNA(n) + a ribonucleoside 5'-triphosphate = RNA(n+1) + diphosphate. In terms of biological role, promotes RNA polymerase assembly. Latches the N- and C-terminal regions of the beta' subunit thereby facilitating its interaction with the beta and alpha subunits. The chain is DNA-directed RNA polymerase subunit omega from Streptococcus uberis (strain ATCC BAA-854 / 0140J).